The following is a 311-amino-acid chain: Methionyl-tRNA formyltransferase (311 aa).

A (6S)-5,6,7,8-tetrahydrofolate-binding site is contributed by 110–113 (SLLP).

This sequence belongs to the Fmt family.

It catalyses the reaction L-methionyl-tRNA(fMet) + (6R)-10-formyltetrahydrofolate = N-formyl-L-methionyl-tRNA(fMet) + (6S)-5,6,7,8-tetrahydrofolate + H(+). Attaches a formyl group to the free amino group of methionyl-tRNA(fMet). The formyl group appears to play a dual role in the initiator identity of N-formylmethionyl-tRNA by promoting its recognition by IF2 and preventing the misappropriation of this tRNA by the elongation apparatus. The protein is Methionyl-tRNA formyltransferase of Streptococcus pneumoniae serotype 19F (strain G54).